The sequence spans 862 residues: Linoleate 9S-lipoxygenase 1 (862 aa).

The PLAT domain maps to 34-161; sequence NDFGATIIDG…NYRYSRVFFA (128 aa). Residues 164 to 862 form the Lipoxygenase domain; that stretch reads TYLPSQMPAA…AKGIPNSISI (699 aa). Residues 212 to 241 are disordered; sequence GRPILGGNSDHPYPRRGRTERKPNASDPSL. H517, H522, H708, N712, and I862 together coordinate Fe cation.

It belongs to the lipoxygenase family. Monomer. Requires Fe cation as cofactor.

The catalysed reaction is (9Z,12Z)-octadecadienoate + O2 = (9S)-hydroperoxy-(10E,12Z)-octadecadienoate. It functions in the pathway lipid metabolism; oxylipin biosynthesis. Functionally, plant lipoxygenase may be involved in a number of diverse aspects of plant physiology including growth and development, pest resistance, and senescence or responses to wounding. It catalyzes the hydroperoxidation of lipids containing a cis,cis-1,4-pentadiene structure. This chain is Linoleate 9S-lipoxygenase 1 (LOX1.1), found in Hordeum vulgare (Barley).